The sequence spans 156 residues: Small ribosomal subunit protein uS7 (156 aa).

Belongs to the universal ribosomal protein uS7 family. Part of the 30S ribosomal subunit. Contacts proteins S9 and S11.

One of the primary rRNA binding proteins, it binds directly to 16S rRNA where it nucleates assembly of the head domain of the 30S subunit. Is located at the subunit interface close to the decoding center, probably blocks exit of the E-site tRNA. This is Small ribosomal subunit protein uS7 from Rhodopseudomonas palustris (strain BisB5).